The chain runs to 193 residues: Bcl-2-like protein 2 (193 aa).

The residue at position 2 (Ala2) is an N-acetylalanine. The BH4 signature appears at 9–29 (DTRALVADFVGYKLRQKGYVC). The BH1 signature appears at 85–104 (ELFQGGPNWGRLVAFFVFGA). Positions 136–151 (DWIHSSGGWAEFTALY) match the BH2 motif. Position 177 is a phosphoserine (Ala177).

The protein belongs to the Bcl-2 family. As to quaternary structure, interacts with HIF3A (via C-terminus domain). Interacts with BOP. Expressed (at protein level) in a wide range of tissues with highest levels in brain, spinal cord, testis, pancreas, heart, spleen and mammary glands. Moderate levels found in thymus, ovary and small intestine. Not detected in salivary gland, muscle or liver. Also expressed in cell lines of myeloid, fibroblast and epithelial origin. Not detected in most lymphoid cell lines.

The protein resides in the mitochondrion membrane. Functionally, promotes cell survival. Blocks dexamethasone-induced apoptosis. Mediates survival of postmitotic Sertoli cells by suppressing death-promoting activity of BAX. In Homo sapiens (Human), this protein is Bcl-2-like protein 2 (BCL2L2).